Here is a 418-residue protein sequence, read N- to C-terminus: Vasopressin V1a receptor (418 aa).

Residues 1 to 15 (MRFSGSPSPGPSNSS) are compositionally biased toward low complexity. The disordered stretch occupies residues 1-20 (MRFSGSPSPGPSNSSRWWPL). The Extracellular portion of the chain corresponds to 1-51 (MRFSGSPSPGPSNSSRWWPLDAGDANTSGDLAGLGEDGGPQADTRNEELAK). N-linked (GlcNAc...) asparagine glycosylation is found at asparagine 13 and asparagine 26. A helical membrane pass occupies residues 52 to 75 (LEIAVLAVIFVVAVLGNSSVLLAL). The Cytoplasmic segment spans residues 76–87 (HRTPRKTSRMHL). Residues 88–109 (FIRHLSLADLAVAFFQVLPQLG) traverse the membrane as a helical segment. Topologically, residues 110-124 (WDITYRFRGPDGLCR) are extracellular. Cysteine 123 and cysteine 202 are oxidised to a cystine. A helical transmembrane segment spans residues 125 to 146 (VVKHMQVFAMFASAYMLVVMTA). The Cytoplasmic portion of the chain corresponds to 147 to 167 (DRYIAVCHPLKTLQQPARRSR). The chain crosses the membrane as a helical span at residues 168–189 (LMIAAAWVLSFVLSTPQYFVFS). The Extracellular portion of the chain corresponds to 190-217 (MVEVSNVTKTYDCWANFIHPWGLPAYVT). N-linked (GlcNAc...) asparagine glycosylation occurs at asparagine 195. A helical transmembrane segment spans residues 218-238 (WMTGSVFVAPVVILGTCYGFI). Topologically, residues 239 to 293 (CYHIWRKVRGKTAGRQGGPAEGAGESALYRGVLHARCVSSVKTISRAKIRTVKMT) are cytoplasmic. The chain crosses the membrane as a helical span at residues 294-313 (FVIVTAYIVCWAPFFIIQMW). Residues 314 to 331 (SAWDKNFSWVESENPATA) are Extracellular-facing. Asparagine 319 carries N-linked (GlcNAc...) asparagine glycosylation. Residues 332-351 (IPALLASLNSCCNPWIYMFF) form a helical membrane-spanning segment. Residues 352-418 (SGHLLQDCAQ…KSIKFIPVST (67 aa)) lie on the Cytoplasmic side of the membrane. Residues cysteine 365 and cysteine 366 are each lipidated (S-palmitoyl cysteine). The segment at 377 to 418 (GSDSMSRRQTSFTNNRSPTNSMGTWKDSPKSSKSIKFIPVST) is disordered. Residues 383 to 399 (RRQTSFTNNRSPTNSMG) are compositionally biased toward polar residues. Serine 404 carries the post-translational modification Phosphoserine.

The protein belongs to the G-protein coupled receptor 1 family. Vasopressin/oxytocin receptor subfamily.

It localises to the cell membrane. In terms of biological role, receptor for arginine vasopressin. The activity of this receptor is mediated by G proteins which activate a phosphatidyl-inositol-calcium second messenger system. This is Vasopressin V1a receptor (AVPR1A) from Ovis aries (Sheep).